Consider the following 124-residue polypeptide: Small ribosomal subunit protein bS6 (124 aa).

Positions 105–115 (EVQHEEARKSA) are enriched in basic and acidic residues. The interval 105–124 (EVQHEEARKSAQSDAPVAAA) is disordered.

Belongs to the bacterial ribosomal protein bS6 family.

Functionally, binds together with bS18 to 16S ribosomal RNA. The polypeptide is Small ribosomal subunit protein bS6 (Polynucleobacter necessarius subsp. necessarius (strain STIR1)).